Reading from the N-terminus, the 355-residue chain is UDP-N-acetylglucosamine--N-acetylmuramyl-(pentapeptide) pyrophosphoryl-undecaprenol N-acetylglucosamine transferase (355 aa).

UDP-N-acetyl-alpha-D-glucosamine contacts are provided by residues 15–17 (TGG), Asn-127, Arg-163, Ser-191, Ile-244, 263–268 (ALTVSE), and Gln-288.

Belongs to the glycosyltransferase 28 family. MurG subfamily.

The protein localises to the cell inner membrane. The enzyme catalyses di-trans,octa-cis-undecaprenyl diphospho-N-acetyl-alpha-D-muramoyl-L-alanyl-D-glutamyl-meso-2,6-diaminopimeloyl-D-alanyl-D-alanine + UDP-N-acetyl-alpha-D-glucosamine = di-trans,octa-cis-undecaprenyl diphospho-[N-acetyl-alpha-D-glucosaminyl-(1-&gt;4)]-N-acetyl-alpha-D-muramoyl-L-alanyl-D-glutamyl-meso-2,6-diaminopimeloyl-D-alanyl-D-alanine + UDP + H(+). It functions in the pathway cell wall biogenesis; peptidoglycan biosynthesis. Cell wall formation. Catalyzes the transfer of a GlcNAc subunit on undecaprenyl-pyrophosphoryl-MurNAc-pentapeptide (lipid intermediate I) to form undecaprenyl-pyrophosphoryl-MurNAc-(pentapeptide)GlcNAc (lipid intermediate II). The polypeptide is UDP-N-acetylglucosamine--N-acetylmuramyl-(pentapeptide) pyrophosphoryl-undecaprenol N-acetylglucosamine transferase (Escherichia coli O127:H6 (strain E2348/69 / EPEC)).